Reading from the N-terminus, the 760-residue chain is Serine/threonine-protein kinase Haspin homolog ALK1 (760 aa).

Phosphoserine is present on residues Ser76 and Ser79. Disordered regions lie at residues 76 to 100 (SDASLNVTTGNNTSRKTTSNSKKRW), 123 to 153 (SSFTSESHKDRESRNVLQQKRKSLQSYSSLD), 187 to 264 (DDIS…STVS), and 362 to 408 (KRNS…CSYS). Polar residues predominate over residues 78–95 (ASLNVTTGNNTSRKTTSN). The KEN box motif lies at 200-202 (KEN). The segment covering 209–220 (KKNSSIASTSSE) has biased composition (polar residues). The short motif at 224–232 (RTPLKPLVN) is the D box element. Residues 237-250 (PTSQPQQQQPLYNA) are compositionally biased toward polar residues. The segment covering 251 to 264 (SLSSRRSSISSTVS) has biased composition (low complexity). A compositionally biased stretch (basic residues) spans 362-386 (KRNSQSSLKHKSSHASLQKFKRNKG). A compositionally biased stretch (low complexity) spans 398–408 (NSSNDDSCSYS). The region spanning 468 to 760 (NCDIKRILNP…NTGDLLKLYK (293 aa)) is the Protein kinase domain. ATP contacts are provided by residues 474 to 482 (ILNPAKGDV) and Lys510.

This sequence belongs to the protein kinase superfamily. Ser/Thr protein kinase family. Haspin subfamily. In terms of processing, periodically phosphorylated during the cell cycle with a phosphorylation peak during mitosis and hyperphosphorylated after DNA damage.

It catalyses the reaction L-seryl-[protein] + ATP = O-phospho-L-seryl-[protein] + ADP + H(+). The catalysed reaction is L-threonyl-[protein] + ATP = O-phospho-L-threonyl-[protein] + ADP + H(+). Serine/threonine haspin-like protein kinase involved in cell cycle regulation. The chain is Serine/threonine-protein kinase Haspin homolog ALK1 (ALK1) from Saccharomyces cerevisiae (strain ATCC 204508 / S288c) (Baker's yeast).